The sequence spans 258 residues: Ribosomal protein L11 methyltransferase (258 aa).

Residues threonine 117, glycine 138, aspartate 160, and asparagine 201 each contribute to the S-adenosyl-L-methionine site.

Belongs to the methyltransferase superfamily. PrmA family.

Its subcellular location is the cytoplasm. It catalyses the reaction L-lysyl-[protein] + 3 S-adenosyl-L-methionine = N(6),N(6),N(6)-trimethyl-L-lysyl-[protein] + 3 S-adenosyl-L-homocysteine + 3 H(+). Its function is as follows. Methylates ribosomal protein L11. In Thermosipho melanesiensis (strain DSM 12029 / CIP 104789 / BI429), this protein is Ribosomal protein L11 methyltransferase.